Reading from the N-terminus, the 513-residue chain is ATP synthase subunit alpha (513 aa).

169–176 (GDRQTGKT) is a binding site for ATP.

This sequence belongs to the ATPase alpha/beta chains family. In terms of assembly, F-type ATPases have 2 components, CF(1) - the catalytic core - and CF(0) - the membrane proton channel. CF(1) has five subunits: alpha(3), beta(3), gamma(1), delta(1), epsilon(1). CF(0) has three main subunits: a(1), b(2) and c(9-12). The alpha and beta chains form an alternating ring which encloses part of the gamma chain. CF(1) is attached to CF(0) by a central stalk formed by the gamma and epsilon chains, while a peripheral stalk is formed by the delta and b chains.

It localises to the cell inner membrane. The enzyme catalyses ATP + H2O + 4 H(+)(in) = ADP + phosphate + 5 H(+)(out). Functionally, produces ATP from ADP in the presence of a proton gradient across the membrane. The alpha chain is a regulatory subunit. The protein is ATP synthase subunit alpha of Haemophilus influenzae (strain 86-028NP).